Consider the following 449-residue polypeptide: 3-phosphoshikimate 1-carboxyvinyltransferase (449 aa).

The interval 1 to 29 (MSHDSVPSPITARAGTPLRGRLRPPGDKS) is disordered. Residues Lys-28, Ser-29, and Arg-33 each contribute to the 3-phosphoshikimate site. Residue Lys-28 participates in phosphoenolpyruvate binding. Residues Gly-101 and Arg-129 each coordinate phosphoenolpyruvate. Residues Ser-175, Gln-177, Asp-330, and Lys-357 each coordinate 3-phosphoshikimate. Residue Gln-177 participates in phosphoenolpyruvate binding. The active-site Proton acceptor is the Asp-330. 2 residues coordinate phosphoenolpyruvate: Arg-361 and Arg-405.

The protein belongs to the EPSP synthase family. Monomer.

The protein resides in the cytoplasm. It carries out the reaction 3-phosphoshikimate + phosphoenolpyruvate = 5-O-(1-carboxyvinyl)-3-phosphoshikimate + phosphate. It functions in the pathway metabolic intermediate biosynthesis; chorismate biosynthesis; chorismate from D-erythrose 4-phosphate and phosphoenolpyruvate: step 6/7. Functionally, catalyzes the transfer of the enolpyruvyl moiety of phosphoenolpyruvate (PEP) to the 5-hydroxyl of shikimate-3-phosphate (S3P) to produce enolpyruvyl shikimate-3-phosphate and inorganic phosphate. The protein is 3-phosphoshikimate 1-carboxyvinyltransferase of Methylobacterium sp. (strain 4-46).